The following is a 199-amino-acid chain: Golgi to ER traffic protein 1 (199 aa).

The Lumenal segment spans residues 1–11 (MLLPDLHPYTI). The helical transmembrane segment at 12–31 (LLSIFLVLVVKQLVATIGKS) threads the bilayer. Over 32–115 (TIQEFVWLVY…SIDKASNALI (84 aa)) the chain is Cytoplasmic. A coiled-coil region spans residues 76–116 (YAKWTKLNRQADKLSAELQKLNQEIQQQKSSIDKASNALIL). The chain crosses the membrane as a helical span at residues 116-136 (LVLTTLPIWIARVFYRKTHLF). Residues 137–160 (YIRQGIFPKYVEWVLALPFLPNGA) lie on the Lumenal side of the membrane. The helical transmembrane segment at 161 to 177 (VGLTIWMFAVNSVVSNF) threads the bilayer. Residues 178–199 (SFLVSFPFAKRVSKPVRDTKVE) are Cytoplasmic-facing.

It belongs to the WRB/GET1 family. As to quaternary structure, component of the Golgi to ER traffic (GET) complex, which is composed of GET1, GET2 and GET3. Within the complex, GET1 and GET2 form a heterotetramer which is stabilized by phosphatidylinositol binding and which binds to the GET3 homodimer.

The protein localises to the endoplasmic reticulum membrane. Its subcellular location is the golgi apparatus membrane. Required for the post-translational delivery of tail-anchored (TA) proteins to the endoplasmic reticulum. Together with GET2, acts as a membrane receptor for soluble GET3, which recognizes and selectively binds the transmembrane domain of TA proteins in the cytosol. The GET complex cooperates with the HDEL receptor ERD2 to mediate the ATP-dependent retrieval of resident ER proteins that contain a C-terminal H-D-E-L retention signal from the Golgi to the ER. The sequence is that of Golgi to ER traffic protein 1 from Candida albicans (strain WO-1) (Yeast).